Consider the following 208-residue polypeptide: MAAYAAFKHVELYNVGKAKKRVLRPPGGGSSDIFGSEMPQTPRNVKNRMASNIFAAEKDNGVKNNVRQGAHRFYFIGDAPRRGQKTVDSHSRLFGEPTRPITPGKNHMKSSIPFGQNTEAVAAQKLLTTNGHYNGKSGSVSSASSSVSSSTENLKMNSGSRSEGNPVTGEGYKVVANEYSQRQESSNGGTPVINKNRIPPGGYSSGLW.

2 disordered regions span residues 24–43 (RPPGGGSSDIFGSEMPQTPR) and 82–106 (RGQKTVDSHSRLFGEPTRPITPGKN). S30 is subject to Phosphoserine. Residue T41 is modified to Phosphothreonine. Residues 82 to 93 (RGQKTVDSHSRL) are compositionally biased toward basic and acidic residues. Phosphothreonine is present on residues T98 and T102. Phosphoserine is present on residues S111, S139, and S150. Residues 132 to 208 (HYNGKSGSVS…PPGGYSSGLW (77 aa)) are disordered. The span at 137 to 150 (SGSVSSASSSVSSS) shows a compositional bias: low complexity. Polar residues-rich tracts occupy residues 151–165 (TENLKMNSGSRSEGN) and 178–189 (EYSQRQESSNGG).

The protein belongs to the MAP Jupiter family. As to expression, ubiquitous expression throughout development. Expressed during cell division in the syncytial embryo. Expressed in developing photoreceptors of the eye imaginal disk of the third larval stage. In adults, highly expressed in neurons of the brain, concentrated in axons. In the adult ovaries, expression accumulates in the germarium and the polar follicular cells as well as in the oocyte along the microtubule network.

The protein localises to the nucleus. Its subcellular location is the cytoplasm. The protein resides in the cytoskeleton. It is found in the spindle. Its function is as follows. Binds to all microtubule populations. This Drosophila melanogaster (Fruit fly) protein is Microtubule-associated protein Jupiter.